Consider the following 100-residue polypeptide: Acylphosphatase (100 aa).

In terms of domain architecture, Acylphosphatase-like spans Arg-14–Ser-100. Active-site residues include Arg-29 and Asn-47.

It belongs to the acylphosphatase family.

The catalysed reaction is an acyl phosphate + H2O = a carboxylate + phosphate + H(+). The protein is Acylphosphatase (acyP) of Synechococcus sp. (strain WH7803).